Reading from the N-terminus, the 98-residue chain is NADH-ubiquinone oxidoreductase chain 4L (98 aa).

Transmembrane regions (helical) follow at residues 1-21 (MAPINLNLILAFSLALLGVLI), 28-48 (STLLCLEGMMLSLFILMTLLI), and 59-79 (APLILLVFSACEAGVGLALLV).

The protein belongs to the complex I subunit 4L family. In terms of assembly, core subunit of respiratory chain NADH dehydrogenase (Complex I) which is composed of 45 different subunits.

The protein resides in the mitochondrion inner membrane. It carries out the reaction a ubiquinone + NADH + 5 H(+)(in) = a ubiquinol + NAD(+) + 4 H(+)(out). Functionally, core subunit of the mitochondrial membrane respiratory chain NADH dehydrogenase (Complex I) which catalyzes electron transfer from NADH through the respiratory chain, using ubiquinone as an electron acceptor. Part of the enzyme membrane arm which is embedded in the lipid bilayer and involved in proton translocation. The chain is NADH-ubiquinone oxidoreductase chain 4L (MT-ND4L) from Isoodon macrourus (Short-nosed bandicoot).